The chain runs to 181 residues: Ribulose bisphosphate carboxylase small subunit, chloroplastic (181 aa).

The N-terminal 54 residues, 1–54, are a transit peptide targeting the chloroplast; that stretch reads MASSMLSSAAVVTSQLQATMVAPFTGLKSSAAFPVTRKTNTDITSIASNGGRVS.

It belongs to the RuBisCO small chain family. Heterohexadecamer of 8 large and 8 small subunits.

It is found in the plastid. The protein resides in the chloroplast. In terms of biological role, ruBisCO catalyzes two reactions: the carboxylation of D-ribulose 1,5-bisphosphate, the primary event in carbon dioxide fixation, as well as the oxidative fragmentation of the pentose substrate. Both reactions occur simultaneously and in competition at the same active site. Although the small subunit is not catalytic it is essential for maximal activity. The sequence is that of Ribulose bisphosphate carboxylase small subunit, chloroplastic from Raphanus sativus (Radish).